The chain runs to 676 residues: Envelope glycoprotein (676 aa).

Residues 1–32 (MGVTGILQLPRDRFKRTSFFLWVIILFQRTFS) form the signal peptide. Residues 33 to 650 (IPLGVIHNST…NDNWWTGWRQ (618 aa)) lie on the Extracellular side of the membrane. N-linked (GlcNAc...) asparagine; by host glycosylation is present at Asn40. Disulfide bonds link Cys53-Cys609, Cys108-Cys135, Cys121-Cys147, Cys511-Cys556, and Cys601-Cys608. Residues 54–201 (RDKLSSTNQL…DFFSSHPLRE (148 aa)) are receptor-binding. Residues Asn204, Asn228, Asn238, Asn257, Asn268, Asn296, Asn317, Asn333, Asn346, Asn386, and Asn413 are each glycosylated (N-linked (GlcNAc...) asparagine; by host). The segment at 305-485 (ELSFTAVSNR…SGKLGLITNT (181 aa)) is mucin-like region. Residues 314-335 (RAKNISGQSPARTSSDPGTNTT) are compositionally biased toward polar residues. Positions 314–337 (RAKNISGQSPARTSSDPGTNTTTE) are disordered. A disordered region spans residues 370–478 (TISTSPQPPT…TGEESASSGK (109 aa)). Residues 414 to 427 (DSTASDTPPATTAA) are compositionally biased toward low complexity. Asn436, Asn454, and Asn462 each carry an N-linked (GlcNAc...) asparagine; by host glycan. The segment covering 447–464 (ATTTSPQNHSETAGNNNT) has biased composition (polar residues). Positions 524–539 (GAAIGLAWIPYFGPAA) are fusion peptide. A coiled-coil region spans residues 554–595 (LICGLRQLANETTQALQLFLRATTELRTFSILNRKAIDFLLQ). Asn563 carries N-linked (GlcNAc...) asparagine; by host glycosylation. A coiled-coil region spans residues 615–634 (WTKNITDKIDQIIHDFVDKT). Asn618 carries an N-linked (GlcNAc...) asparagine; by host glycan. Residues 651-671 (WIPAGIGVTGVIIAVIALFCI) traverse the membrane as a helical segment. S-palmitoyl cysteine; by host attachment occurs at residues Cys670 and Cys672. At 672-676 (CKFVF) the chain is on the cytoplasmic side.

It belongs to the filoviruses glycoprotein family. As to quaternary structure, homotrimer; each monomer consists of a GP1 and a GP2 subunit linked by disulfide bonds. The resulting peplomers (GP1,2) protrude from the virus surface as spikes. Interacts with host integrin alpha-V/ITGAV. Interacts with host CLEC10A. Binds also to host CD209 and CLEC4M/DC-SIGN(R). Interacts with host FOLR1. Interacts with BST2; this interaction inhibits the antiviral effect of BST2 and this allows viral release from infected cells. Interacts with host FCN1; this interaction enhances viral entry. Interacts with host TLR4; this interaction induces cell death in T-lymphocytes or proinflammatory cytokines and SOCS1 production in monocytes. Interacts with host entry receptor NPC1. In terms of assembly, GP1 and GP2delta are part of GP1,2delta soluble complexes released by ectodomain shedding. In terms of processing, the signal peptide region modulates GP's high mannose glycosylation, thereby determining the efficiency of the interactions with DC-SIGN(R). N-glycosylated. Post-translationally, O-glycosylated in the mucin-like region. In terms of processing, palmitoylation of GP2 is not required for its function. Specific enzymatic cleavages in vivo yield mature proteins. The precursor is processed into GP1 and GP2 by host cell furin in the trans Golgi, and maybe by other host proteases, to yield the mature GP1 and GP2 proteins. The cleavage site corresponds to the furin optimal cleavage sequence [KR]-X-[KR]-R. This cleavage does not seem to be required for function. After the internalization of the virus into cell endosomes, GP1 C-terminus is removed by the endosomal proteases cathepsin B, cathepsin L, or both, leaving a 19-kDa N-terminal fragment which is further digested by cathepsin B. Proteolytic processing of GP1,2 by host ADAM17 can remove the transmembrane anchor of GP2 and leads to shedding of complexes consisting in GP1 and truncated GP2 (GP1,2delta).

It localises to the virion membrane. Its subcellular location is the host cell membrane. The protein localises to the secreted. Trimeric GP1,2 complexes form the virion surface spikes and mediate the viral entry processes, with GP1 acting as the receptor-binding subunit and GP2 as the membrane fusion subunit. At later times of infection, down-regulates the expression of various host cell surface molecules that are essential for immune surveillance and cell adhesion. Down-modulates several integrins including ITGA1, ITGA2, ITGA3, ITGA4, ITGA5, ITGA6, ITGAV and ITGB1. This decrease in cell adhesion molecules may lead to cell detachment, contributing to the disruption of blood vessel integrity and hemorrhages developed during infection (cytotoxicity). Interacts with host TLR4 and thereby stimulates the differentiation and activation of monocytes leading to bystander death of T-lymphocytes. Down-regulates as well the function of host natural killer cells. Counteracts the antiviral effect of host BST2/tetherin that restricts release of progeny virions from infected cells. However, cooperates with VP40 and host BST2 to activate canonical NF-kappa-B pathway in a manner dependent on neddylation. Functionally, functions as a decoy for anti-GP1,2 antibodies thereby contributing to viral immune evasion. Interacts and activates host macrophages and dendritic cells inducing up-regulation of cytokine transcription. This effect is mediated throught activation of host TLR4. In terms of biological role, responsible for binding to the receptor(s) on target cells. Interacts with CD209/DC-SIGN and CLEC4M/DC-SIGNR which act as cofactors for virus entry into dendritic cells (DCs) and endothelial cells. Binding to the macrophage specific lectin CLEC10A also seems to enhance virus infectivity. Interaction with FOLR1/folate receptor alpha may be a cofactor for virus entry in some cell types, although results are contradictory. Members of the Tyro3 receptor tyrosine kinase family also seem to be cell entry factors in filovirus infection. Once attached, the virions are internalized through clathrin-dependent endocytosis and/or macropinocytosis. After internalization of the virus into the endosomes of the host cell, proteolysis of GP1 by two cysteine proteases, CTSB/cathepsin B and CTSL/cathepsin L removes the glycan cap and allows GP1 binding to the host entry receptor NPC1. NPC1-binding, Ca(2+) and acidic pH induce a conformational change of GP2, which unmasks its fusion peptide and permit membranes fusion. Its function is as follows. Acts as a class I viral fusion protein. Under the current model, the protein has at least 3 conformational states: pre-fusion native state, pre-hairpin intermediate state, and post-fusion hairpin state. During viral and target cell membrane fusion, the coiled coil regions (heptad repeats) assume a trimer-of-hairpins structure, positioning the fusion peptide in close proximity to the C-terminal region of the ectodomain. The formation of this structure appears to drive apposition and subsequent fusion of viral and target cell membranes. Responsible for penetration of the virus into the cell cytoplasm by mediating the fusion of the membrane of the endocytosed virus particle with the endosomal membrane. Low pH in endosomes induces an irreversible conformational change in GP2, releasing the fusion hydrophobic peptide. This chain is Envelope glycoprotein (GP), found in Zaire ebolavirus (strain Kikwit-95) (ZEBOV).